The primary structure comprises 299 residues: Putative transposase InsZ (299 aa).

The span at Pro-276–Val-291 shows a compositional bias: basic residues. Residues Pro-276 to Lys-299 are disordered.

This is Putative transposase InsZ (insZ) from Escherichia coli (strain K12).